The primary structure comprises 346 residues: Phosphoribosylformylglycinamidine cyclo-ligase (346 aa).

This sequence belongs to the AIR synthase family.

The protein resides in the cytoplasm. It carries out the reaction 2-formamido-N(1)-(5-O-phospho-beta-D-ribosyl)acetamidine + ATP = 5-amino-1-(5-phospho-beta-D-ribosyl)imidazole + ADP + phosphate + H(+). It participates in purine metabolism; IMP biosynthesis via de novo pathway; 5-amino-1-(5-phospho-D-ribosyl)imidazole from N(2)-formyl-N(1)-(5-phospho-D-ribosyl)glycinamide: step 2/2. This chain is Phosphoribosylformylglycinamidine cyclo-ligase, found in Bacillus cereus (strain AH187).